Reading from the N-terminus, the 273-residue chain is Putative ankyrin repeat protein RBE_0317 (273 aa).

ANK repeat units follow at residues 31-60 (LGKE…DFYS), 93-123 (NGNT…EVNT), 127-157 (GGNS…NVNE), 161-191 (YGDT…DVNE), and 195-225 (QGET…DTKQ).

The protein is Putative ankyrin repeat protein RBE_0317 of Rickettsia bellii (strain RML369-C).